A 345-amino-acid chain; its full sequence is tRNA-dihydrouridine(20/20a) synthase (345 aa).

FMN contacts are provided by residues Pro26–Leu28 and Gln78. Cys108 acts as the Proton donor in catalysis. Residues Lys147, His180, Asn220 to Gly222, and Gly242 to Arg243 contribute to the FMN site.

This sequence belongs to the Dus family. DusA subfamily. It depends on FMN as a cofactor.

The catalysed reaction is 5,6-dihydrouridine(20) in tRNA + NADP(+) = uridine(20) in tRNA + NADPH + H(+). It carries out the reaction 5,6-dihydrouridine(20) in tRNA + NAD(+) = uridine(20) in tRNA + NADH + H(+). The enzyme catalyses 5,6-dihydrouridine(20a) in tRNA + NADP(+) = uridine(20a) in tRNA + NADPH + H(+). It catalyses the reaction 5,6-dihydrouridine(20a) in tRNA + NAD(+) = uridine(20a) in tRNA + NADH + H(+). Its function is as follows. Catalyzes the synthesis of 5,6-dihydrouridine (D), a modified base found in the D-loop of most tRNAs, via the reduction of the C5-C6 double bond in target uridines. Specifically modifies U20 and U20a in tRNAs. The protein is tRNA-dihydrouridine(20/20a) synthase of Yersinia pestis.